Consider the following 537-residue polypeptide: 2-succinyl-5-enolpyruvyl-6-hydroxy-3-cyclohexene-1-carboxylate synthase (537 aa).

This sequence belongs to the TPP enzyme family. MenD subfamily. In terms of assembly, homodimer. Mg(2+) serves as cofactor. Requires Mn(2+) as cofactor. It depends on thiamine diphosphate as a cofactor.

It catalyses the reaction isochorismate + 2-oxoglutarate + H(+) = 5-enolpyruvoyl-6-hydroxy-2-succinyl-cyclohex-3-ene-1-carboxylate + CO2. It functions in the pathway quinol/quinone metabolism; 1,4-dihydroxy-2-naphthoate biosynthesis; 1,4-dihydroxy-2-naphthoate from chorismate: step 2/7. Its pathway is quinol/quinone metabolism; menaquinone biosynthesis. In terms of biological role, catalyzes the thiamine diphosphate-dependent decarboxylation of 2-oxoglutarate and the subsequent addition of the resulting succinic semialdehyde-thiamine pyrophosphate anion to isochorismate to yield 2-succinyl-5-enolpyruvyl-6-hydroxy-3-cyclohexene-1-carboxylate (SEPHCHC). This is 2-succinyl-5-enolpyruvyl-6-hydroxy-3-cyclohexene-1-carboxylate synthase from Desulfotalea psychrophila (strain LSv54 / DSM 12343).